A 736-amino-acid chain; its full sequence is 1,4-alpha-glucan branching enzyme GlgB (736 aa).

D415 functions as the Nucleophile in the catalytic mechanism. E468 serves as the catalytic Proton donor.

It belongs to the glycosyl hydrolase 13 family. GlgB subfamily. In terms of assembly, monomer.

The enzyme catalyses Transfers a segment of a (1-&gt;4)-alpha-D-glucan chain to a primary hydroxy group in a similar glucan chain.. The protein operates within glycan biosynthesis; glycogen biosynthesis. Functionally, catalyzes the formation of the alpha-1,6-glucosidic linkages in glycogen by scission of a 1,4-alpha-linked oligosaccharide from growing alpha-1,4-glucan chains and the subsequent attachment of the oligosaccharide to the alpha-1,6 position. The sequence is that of 1,4-alpha-glucan branching enzyme GlgB from Rhodopirellula baltica (strain DSM 10527 / NCIMB 13988 / SH1).